The following is a 292-amino-acid chain: ATP synthase gamma chain (292 aa).

The protein belongs to the ATPase gamma chain family. In terms of assembly, F-type ATPases have 2 components, CF(1) - the catalytic core - and CF(0) - the membrane proton channel. CF(1) has five subunits: alpha(3), beta(3), gamma(1), delta(1), epsilon(1). CF(0) has three main subunits: a, b and c.

Its subcellular location is the cell membrane. Functionally, produces ATP from ADP in the presence of a proton gradient across the membrane. The gamma chain is believed to be important in regulating ATPase activity and the flow of protons through the CF(0) complex. The chain is ATP synthase gamma chain from Streptococcus mutans serotype c (strain ATCC 700610 / UA159).